The chain runs to 301 residues: MNILLFGKTGQVGWELQRALAPLGNLIALDVHSTDYCGDFSNPEGVAETVKKIRPDVIVNAAAHTDVDKAESEPEFAQLLNATSVEAIAKAANEVGAWVIHYSTDYVFPGTGEIPWQGGTDATAPLNVYGETKLSSEKKALQKHCGKHIIFRTSWVYAGKGNNFAKTMLRLAKEREELAVINDQFGRPTGAELLADCTAHAIRVAVDKPEVAGLYHLVAGGTTTWHDYAALVFEEARKAGINLALNKLNAVPTTAYPTPARRPHNSRLNTEKFQQNFALVLPDWQVGVKRMLNELFTTTAI.

NADH-binding positions include 10-12 (GQV), aspartate 30, 39-40 (DF), and 63-65 (AHT). 11–12 (QV) lines the NADPH pocket. NADPH is bound by residues 39–40 (DF), 63–65 (AHT), and tyrosine 102. 104–105 (TD) serves as a coordination point for dTDP-beta-L-rhamnose. Residues tyrosine 129 and lysine 133 each contribute to the NADH site. Tyrosine 129 and lysine 133 together coordinate NADPH. Residue tyrosine 129 is the Proton donor/acceptor of the active site. Tryptophan 155 serves as a coordination point for dTDP-beta-L-rhamnose.

It belongs to the dTDP-4-dehydrorhamnose reductase family. As to quaternary structure, homodimer. Mg(2+) serves as cofactor.

The catalysed reaction is dTDP-beta-L-rhamnose + NADP(+) = dTDP-4-dehydro-beta-L-rhamnose + NADPH + H(+). Its pathway is carbohydrate biosynthesis; dTDP-L-rhamnose biosynthesis. It functions in the pathway bacterial outer membrane biogenesis; LPS O-antigen biosynthesis. In terms of biological role, involved in the biosynthesis of the dTDP-L-rhamnose which is an important component of lipopolysaccharide (LPS). Catalyzes the reduction of dTDP-6-deoxy-L-lyxo-4-hexulose to yield dTDP-L-rhamnose. RmlD uses NADH and NADPH nearly equally well. The protein is dTDP-4-dehydrorhamnose reductase of Escherichia coli.